We begin with the raw amino-acid sequence, 416 residues long: Putative competence-damage inducible protein (416 aa).

Belongs to the CinA family.

The protein is Putative competence-damage inducible protein of Levilactobacillus brevis (strain ATCC 367 / BCRC 12310 / CIP 105137 / JCM 1170 / LMG 11437 / NCIMB 947 / NCTC 947) (Lactobacillus brevis).